A 394-amino-acid chain; its full sequence is Cell adhesion molecule 3 (394 aa).

A signal peptide spans 1–17 (MHHPVILLLCLSSLAGA). Residues 18–326 (ANLPPEDLSQ…PIPSTSSIDH (309 aa)) are Extracellular-facing. An Ig-like V-type domain is found at 22 to 120 (PEDLSQPVTA…PVRTAKAVVT (99 aa)). 2 disulfide bridges follow: cysteine 45–cysteine 105 and cysteine 147–cysteine 204. 2 consecutive Ig-like C2-type domains span residues 128–223 (PQVS…HKIQ) and 228–306 (PTAK…TFIT). The tract at residues 217–240 (SSSHKIQVQYKPTAKIESRPSMPR) is disordered. Residues 230-240 (AKIESRPSMPR) show a composition bias toward basic and acidic residues. The cysteines at positions 249 and 295 are disulfide-linked. A helical membrane pass occupies residues 327 to 347 (AVIGGVVAVIAFLLFCLLIVL). Over 348 to 394 (GRYLIRHKGTYLTHEAKGSDDAPDADTAIINAEGGQGGSDDKKEYFI) the chain is Cytoplasmic. A disordered region spans residues 363 to 394 (AKGSDDAPDADTAIINAEGGQGGSDDKKEYFI).

It belongs to the nectin family.

The protein resides in the cell membrane. Its subcellular location is the cell junction. Its function is as follows. May be involved in cell-cell adhesion. The polypeptide is Cell adhesion molecule 3 (cadm3) (Xenopus laevis (African clawed frog)).